The primary structure comprises 849 residues: Protein lap1 (849 aa).

LRR repeat units lie at residues 18–39, 41–62, 64–85, 87–108, 110–131, 133–155, 156–177, 179–200, 202–224, 225–246, 248–269, 271–292, 294–315, 317–338, 340–362, 363–384, and 386–407; these read VIDK…WQHE, TLEE…LFYC, GLRV…IGSL, QLQH…IKSC, HLTH…ITSL, SLQE…GRLV, NLRI…MVRL, NLQR…VGEL, SLRE…GKLR, DLQH…LSNW, NVEV…VGML, SLVT…ISYL, QLEE…IGML, SLRF…LCSC, QLSV…GNLS, KMKV…MLNL, and NLTS…QYLD. A disordered region spans residues 716 to 752; it reads NNISNNLEPNPEEEDQELDDTMSQHSLNSTATNNTSK. Residues 725 to 735 show a composition bias toward acidic residues; it reads NPEEEDQELDD. The segment covering 736-752 has biased composition (polar residues); that stretch reads TMSQHSLNSTATNNTSK. A PDZ domain is found at 770-849; the sequence is VKQVTLKWEN…TVMNIMLSRK (80 aa).

It belongs to the LAP (LRR and PDZ) protein family.

Its function is as follows. May have a role in assembling adherens junctions. The sequence is that of Protein lap1 from Drosophila melanogaster (Fruit fly).